Consider the following 516-residue polypeptide: uncharacterized protein (516 aa).

This is an uncharacterized protein from Azotobacter chroococcum mcd 1.